The sequence spans 758 residues: Probable ubiquitin carboxyl-terminal hydrolase creB (758 aa).

Residues 1-27 are disordered; that stretch reads MGSFLRSFRRDVGSSTPSVGATPAKKE. In terms of domain architecture, USP spans 57-468; it reads FGMENYGNTC…CAYVLFYQET (412 aa). The active-site Nucleophile is the Cys-66. Disordered stretches follow at residues 116–148 and 243–268; these read AEAQAEKQRLANAQRPGAPPAQPPKPEDKDSSE and QPIPSLPPADTTDSSRQSISSGSKTP. The span at 253–268 shows a compositional bias: polar residues; that stretch reads TTDSSRQSISSGSKTP. The Proton acceptor role is filled by His-419. Residues 514–744 form a disordered region; sequence IPVQDEPQRH…KGDRAGHGKW (231 aa). Residues 554–563 are compositionally biased toward pro residues; it reads ATPPPVPPIP. The stretch at 573 to 631 forms a coiled coil; that stretch reads KKSDIQSKKERAKEEKERKAAEKEMEKQRRKEQEARVKENQRREEAELKAALEASKASK. 2 stretches are compositionally biased toward basic and acidic residues: residues 573–650 and 729–740; these read KKSD…DPKR and DALKSPKGDRAG.

This sequence belongs to the peptidase C19 family. As to quaternary structure, interacts with creA, creC and qutD.

The catalysed reaction is Thiol-dependent hydrolysis of ester, thioester, amide, peptide and isopeptide bonds formed by the C-terminal Gly of ubiquitin (a 76-residue protein attached to proteins as an intracellular targeting signal).. Ubiquitin thioesterase component of the regulatory network controlling carbon source utilization through ubiquitination and deubiquitination involving creA, creB, creC, creD and acrB. Deubiquitinates the creA catabolic repressor and the quinate permease qutD. Also plays a role in response to carbon starvation and the control of extracellular proteases activity. The protein is Probable ubiquitin carboxyl-terminal hydrolase creB (creB) of Aspergillus niger (strain ATCC MYA-4892 / CBS 513.88 / FGSC A1513).